The following is a 153-amino-acid chain: Small ribosomal subunit protein bS6 (153 aa).

The segment at 94–153 (EAHEEGPSAMMQKRDRDDRPRRDGDRPDRGPREDRGPRPPREGGFGDREDRPRRPREDRA) is disordered.

It belongs to the bacterial ribosomal protein bS6 family.

Its function is as follows. Binds together with bS18 to 16S ribosomal RNA. In Agrobacterium fabrum (strain C58 / ATCC 33970) (Agrobacterium tumefaciens (strain C58)), this protein is Small ribosomal subunit protein bS6.